The following is a 2368-amino-acid chain: Serine/threonine-protein kinase MEC1 (2368 aa).

The FAT domain maps to 1399–1944; the sequence is LLAQRSLETD…LWYITALVNS (546 aa). The PI3K/PI4K catalytic domain maps to 2049 to 2352; that stretch reads FGSSYKVFSS…QTETLIQEAT (304 aa). The interval 2055–2061 is G-loop; the sequence is VFSSLKK. The binding to the RPA complex stretch occupies residues 2140–2368; sequence SILSTKYESL…KMYIGWLPFW (229 aa). The interval 2221 to 2229 is catalytic loop; sequence GLGDRHCEN. An activation loop region spans residues 2241–2265; it reads HVDFDCLFEKGKRLPVPEIVPFRLT. The FATC domain occupies 2336–2368; that stretch reads LVLSVAGQTETLIQEATSEDNLSKMYIGWLPFW.

This sequence belongs to the PI3/PI4-kinase family. ATM subfamily. As to quaternary structure, interacts with LCD1, which is required for localization MEC1 to the RPA complex. Interacts directly with the RPA subunits RFA1 and RFA2.

It localises to the nucleus. It carries out the reaction L-seryl-[protein] + ATP = O-phospho-L-seryl-[protein] + ADP + H(+). The enzyme catalyses L-threonyl-[protein] + ATP = O-phospho-L-threonyl-[protein] + ADP + H(+). In terms of biological role, serine/threonine protein kinase which activates checkpoint signaling upon genotoxic stresses such as ionizing radiation (IR), ultraviolet light (UV), or DNA replication stalling, thereby acting as a DNA damage sensor. Recognizes the substrate consensus sequence [ST]-Q. Recruited in complex with protein LCD1 by the single-strand-binding protein complex RPA to DNA lesions in order to initiate the DNA repair by homologous recombination, after the MRX-complex and TEL1 are displaced. Phosphorylates LCD1 and RPA2, a subunit of RPA, involved in DNA replication, repair and recombination. Phosphorylates RAD9, CHK1 and RAD53, which leads to the activation of the CHK1 and RAD53 kinases involved in DNA damage repair cascade. Phosphorylates histone H2A to form H2AS128ph (gamma-H2A) at sites of DNA damage, also involved in the regulation of DNA damage response mechanism. Also phosphorylates SLX4 and RTT107 which are proteins involved in genome stability. Required for cell growth and meiotic recombination. The protein is Serine/threonine-protein kinase MEC1 (MEC1) of Saccharomyces cerevisiae (strain ATCC 204508 / S288c) (Baker's yeast).